The primary structure comprises 271 residues: Phosphate import ATP-binding protein PstB (271 aa).

Residues 25 to 266 (FDTKNLNLWY…PSDKRTEDYI (242 aa)) form the ABC transporter domain. Residue 57–64 (GPSGCGKS) participates in ATP binding.

This sequence belongs to the ABC transporter superfamily. Phosphate importer (TC 3.A.1.7) family. In terms of assembly, the complex is composed of two ATP-binding proteins (PstB), two transmembrane proteins (PstC and PstA) and a solute-binding protein (PstS).

It localises to the cell membrane. It catalyses the reaction phosphate(out) + ATP + H2O = ADP + 2 phosphate(in) + H(+). Its function is as follows. Part of the ABC transporter complex PstSACB involved in phosphate import. Responsible for energy coupling to the transport system. This is Phosphate import ATP-binding protein PstB from Bacillus cereus (strain ATCC 14579 / DSM 31 / CCUG 7414 / JCM 2152 / NBRC 15305 / NCIMB 9373 / NCTC 2599 / NRRL B-3711).